The primary structure comprises 781 residues: Catenin beta-1 (781 aa).

Position 2 is an N-acetylalanine (A2). An interaction with VCL region spans residues 2–23; the sequence is ATQADLMELDMAMEPDRKAAVS. S23 is subject to Phosphoserine; by GSK3-beta; alternate. A glycan (O-linked (GlcNAc) serine; alternate) is linked at S23. Phosphoserine; by GSK3-beta is present on S29. A phosphoserine; by GSK3-beta and HIPK2 mark is found at S33 and S37. The interval 34-57 is disordered; the sequence is GIHSGATTTAPSLSGKGNPEEEDV. A Phosphothreonine; by GSK3-beta modification is found at T41. Position 45 is a phosphoserine (S45). At K49 the chain carries N6-acetyllysine. Y64 carries the phosphotyrosine; by PTK6 modification. Phosphotyrosine; by FYN and PTK6 is present on Y142. ARM repeat units follow at residues 151–191, 193–234, 235–276, 277–318, 319–360, 361–389, 400–441, 442–484, 489–530, 531–571, 594–636, and 637–666; these read RAIP…IMRS, QMVS…IFKS, GGIP…VRLA, GGLQ…ILAS, GGPQ…IVEA, GGMQ…RNLS, GLLG…VCQV, GGIE…AQNA, YGLP…LREQ, GAIP…EIVE, NTIP…AEGA, and TAPL…SEDK. The interaction with BCL9 stretch occupies residues 156-178; sequence LTKLLNDEDQVVVNKAAVMVHQL. S191 is subject to Phosphoserine; by CDK5. The residue at position 246 (S246) is a Phosphoserine; by CDK5. The residue at position 331 (Y331) is a Phosphotyrosine; by PTK6. Phosphotyrosine; by SRC and PTK6 is present on Y333. S552 is modified (phosphoserine). Position 556 is a (Microbial infection) Phosphothreonine (T556). Residue T556 is modified to Phosphothreonine. S-nitrosocysteine is present on C619. S675 bears the Phosphoserine mark. The segment at 705–781 is disordered; it reads EPLGYRQDDP…NQLAWFDTDL (77 aa). Basic and acidic residues predominate over residues 734–745; that stretch reads MMEHEMGGHHPG. The interval 772 to 781 is interaction with SCRIB; that stretch reads NQLAWFDTDL.

It belongs to the beta-catenin family. As to quaternary structure, two separate complex-associated pools are found in the cytoplasm. The majority is present as component of an E-cadherin:catenin adhesion complex composed of at least E-cadherin/CDH1 and beta-catenin/CTNNB1, and possibly alpha-catenin/CTNNA1; the complex is located to adherens junctions. The stable association of CTNNA1 is controversial as CTNNA1 was shown not to bind to F-actin when assembled in the complex. Alternatively, the CTNNA1-containing complex may be linked to F-actin by other proteins such as LIMA1. Another cytoplasmic pool is part of a large complex containing AXIN1, AXIN2, APC, CSNK1A1 and GSK3B that promotes phosphorylation on N-terminal Ser and Thr residues and ubiquitination of CTNNB1 via BTRC and its subsequent degradation by the proteasome. Wnt-dependent activation of DVL antagonizes the action of GSK3B. When GSK3B activity is inhibited the complex dissociates, CTNNB1 is dephosphorylated and is no longer targeted for destruction. The stabilized protein translocates to the nucleus, where it binds TCF/LEF-1 family members, BCL9, BCL9L and possibly also RUVBL1 and CHD8. Binds CTNNBIP and EP300. CTNNB1 forms a ternary complex with LEF1 and EP300 that is disrupted by CTNNBIP1 binding. Interacts with TAX1BP3 (via the PDZ domain); this interaction inhibits the transcriptional activity of CTNNB1. Interacts with AJAP1, BAIAP1, CARM1, CTNNA3, CXADR and PCDH11Y. Binds NHERF1. Interacts with GLIS2 and MUC1. Interacts with SLC30A9. Interacts with XIRP1. Interacts directly with AXIN1; the interaction is regulated by CDK2 phosphorylation of AXIN1. Interacts with SCRIB. Interacts with RAPGEF2. Interacts with PTPRU (via the cytoplasmic juxtamembrane domain). Interacts with EMD. Interacts with TNIK and TCF7L2. Interacts with SESTD1 and TRPC4. Interacts with CAV1. Interacts with TRPV4. The TRPV4 and CTNNB1 complex can interact with CDH1. Interacts with VCL. Interacts with PTPRJ. Interacts with PKT7 and CDK2. Interacts with FAT1 (via the cytoplasmic domain). Interacts with NANOS1 and NDRG2. Interacts with isoform 1 of NEK2. Interacts with both isoform 1 and isoform 2 of CDK5. Interacts with PTK6. Interacts with SOX7; this interaction may lead to proteasomal degradation of active CTNNB1 and thus inhibition of Wnt/beta-catenin-stimulated transcription. Identified in a complex with HINT1 and MITF. Interacts with FHIT. The CTNNB1 and TCF7L2/TCF4 complex interacts with PML (isoform PML-4). Interacts with FERMT2. Identified in a complex with TCF7L2/TCF4 and FERMT2. Interacts with RORA. May interact with P-cadherin/CDH3. Interacts with RNF220. Interacts with CTNND2. Interacts (via the C-terminal region) with CBY1. The complex composed, at least, of APC, CTNNB1 and GSK3B interacts with JPT1; the interaction requires the inactive form of GSK3B (phosphorylated at 'Ser-9'). Interacts with DLG5. Interacts with FAM53B; promoting translocation to the nucleus. Interacts with TMEM170B. Interacts with AHI1. Interacts with GID8. Component of an cadherin:catenin adhesion complex composed of at least of CDH26, beta-catenin/CTNNB1, alpha-catenin/CTNNA1 and p120 catenin/CTNND1. Forms a complex comprising APPL1, RUVBL2, APPL2, HDAC1 and HDAC2. Interacts with IRF2BPL; mediates the ubiquitination and degradation of CTNNB1. Interacts with AMFR. Interacts with LMBR1L. Interacts with SOX30; prevents interaction of CTNNB1 with TCF7L2/TCF4 and leads to inhibition of Wnt signaling. Interacts with SOX9; inhibiting CTNNB1 activity by competing with the binding sites of TCF/LEF within CTNNB1, thereby inhibiting the Wnt signaling. Interacts with SPN/CD43 cytoplasmic tail. Interacts (when phosphorylated at Tyr-333) with isoform M2 of PKM (PKM2); promoting transcription activation. Interacts with PKP2 (via HEAD domain). Interacts with CDH1. Interacts (when unphosphorylated) with FLYWCH1, perhaps preventing interaction of CTNNB1 with TCF4, and thereby regulating transcription activation; phosphorylation of CTNNB1 may inhibit the interaction. Interacts (via the central armadillo domains) with probable transcriptional regulator ADNP (via N-terminal region); interaction is direct and stabilizes CTNNB1 by modulating its phosphorylation by glycogen synthase kinase-3 beta GSK3B. Interacts with NR5A2. Interacts with DSG2; the interaction promotes localization of CTNNB1 at cell junctions thus reducing its nuclear localization and subsequent transcription of CTNNB1/TCF-target genes. (Microbial infection) Interacts with herpes virus 8 protein vPK; this interaction inhibits the Wnt signaling pathway. Post-translationally, phosphorylation at Ser-552 by AMPK promotes stabilization of the protein, enhancing TCF/LEF-mediated transcription. Phosphorylation by GSK3B requires prior phosphorylation of Ser-45 by another kinase. Phosphorylation proceeds then from Thr-41 to Ser-37 and Ser-33. Phosphorylated by NEK2. EGF stimulates tyrosine phosphorylation. Phosphorylated on Ser-33 and Ser-37 by HIPK2 and GSK3B, this phosphorylation triggers proteasomal degradation. Phosphorylation on Ser-191 and Ser-246 by CDK5. Phosphorylation by CDK2 regulates insulin internalization. Phosphorylation by PTK6 at Tyr-64, Tyr-142, Tyr-331 and/or Tyr-333 with the predominant site at Tyr-64 is not essential for inhibition of transcriptional activity. Phosphorylation by SRC at Tyr-333 promotes interaction with isoform M2 of PKM (PKM2); promoting transcription activation. Ubiquitinated by the SCF(BTRC) E3 ligase complex when phosphorylated by GSK3B, leading to its degradation. Ubiquitinated by a E3 ubiquitin ligase complex containing UBE2D1, SIAH1, CACYBP/SIP, SKP1, APC and TBL1X, leading to its subsequent proteasomal degradation. Ubiquitinated and degraded following interaction with SOX9. Ubiquitinated via 'Lys-11'- and 'Lys-29'-linked ubiquitin chains by UBR5, leading to its stabilization. In terms of processing, S-nitrosylation at Cys-619 within adherens junctions promotes VEGF-induced, NO-dependent endothelial cell permeability by disrupting interaction with E-cadherin, thus mediating disassembly adherens junctions. Post-translationally, O-glycosylation at Ser-23 decreases nuclear localization and transcriptional activity, and increases localization to the plasma membrane and interaction with E-cadherin CDH1. Deacetylated at Lys-49 by SIRT1. In terms of processing, phosphorylated at Thr-556 by herpes virus 1/HHV-1 leading to CTNNB1 inhibition. In terms of tissue distribution, expressed in several hair follicle cell types: basal and peripheral matrix cells, and cells of the outer and inner root sheaths. Expressed in colon. Present in cortical neurons (at protein level). Expressed in breast cancer tissues (at protein level).

Its subcellular location is the cytoplasm. It is found in the nucleus. It localises to the cytoskeleton. The protein resides in the cell junction. The protein localises to the adherens junction. Its subcellular location is the cell membrane. It is found in the microtubule organizing center. It localises to the centrosome. The protein resides in the spindle pole. The protein localises to the synapse. Its subcellular location is the cilium basal body. Functionally, key downstream component of the canonical Wnt signaling pathway. In the absence of Wnt, forms a complex with AXIN1, AXIN2, APC, CSNK1A1 and GSK3B that promotes phosphorylation on N-terminal Ser and Thr residues and ubiquitination of CTNNB1 via BTRC and its subsequent degradation by the proteasome. In the presence of Wnt ligand, CTNNB1 is not ubiquitinated and accumulates in the nucleus, where it acts as a coactivator for transcription factors of the TCF/LEF family, leading to activate Wnt responsive genes. Also acts as a coactivator for other transcription factors, such as NR5A2. Promotes epithelial to mesenchymal transition/mesenchymal to epithelial transition (EMT/MET) via driving transcription of CTNNB1/TCF-target genes. Involved in the regulation of cell adhesion, as component of an E-cadherin:catenin adhesion complex. Acts as a negative regulator of centrosome cohesion. Involved in the CDK2/PTPN6/CTNNB1/CEACAM1 pathway of insulin internalization. Blocks anoikis of malignant kidney and intestinal epithelial cells and promotes their anchorage-independent growth by down-regulating DAPK2. Disrupts PML function and PML-NB formation by inhibiting RANBP2-mediated sumoylation of PML. Promotes neurogenesis by maintaining sympathetic neuroblasts within the cell cycle. Involved in chondrocyte differentiation via interaction with SOX9: SOX9-binding competes with the binding sites of TCF/LEF within CTNNB1, thereby inhibiting the Wnt signaling. Acts as a positive regulator of odontoblast differentiation during mesenchymal tooth germ formation, via promoting the transcription of differentiation factors such as LEF1, BMP2 and BMP4. Activity is repressed in a MSX1-mediated manner at the bell stage of mesenchymal tooth germ formation which prevents premature differentiation of odontoblasts. The sequence is that of Catenin beta-1 from Homo sapiens (Human).